The chain runs to 162 residues: Phosphopantetheine adenylyltransferase (162 aa).

Serine 9 serves as a coordination point for substrate. ATP is bound by residues 9–10 (SF) and histidine 17. Lysine 41, isoleucine 77, and lysine 91 together coordinate substrate. ATP contacts are provided by residues 92–94 (GLR), glutamate 102, and 126–132 (YAFLSSS).

The protein belongs to the bacterial CoaD family. As to quaternary structure, homohexamer. Mg(2+) serves as cofactor.

The protein localises to the cytoplasm. It carries out the reaction (R)-4'-phosphopantetheine + ATP + H(+) = 3'-dephospho-CoA + diphosphate. It participates in cofactor biosynthesis; coenzyme A biosynthesis; CoA from (R)-pantothenate: step 4/5. Its function is as follows. Reversibly transfers an adenylyl group from ATP to 4'-phosphopantetheine, yielding dephospho-CoA (dPCoA) and pyrophosphate. The chain is Phosphopantetheine adenylyltransferase from Frankia casuarinae (strain DSM 45818 / CECT 9043 / HFP020203 / CcI3).